We begin with the raw amino-acid sequence, 412 residues long: Serine hydroxymethyltransferase (412 aa).

(6S)-5,6,7,8-tetrahydrofolate contacts are provided by residues Leu117 and 121–123; that span reads GHL. Lys226 bears the N6-(pyridoxal phosphate)lysine mark. 349 to 351 serves as a coordination point for (6S)-5,6,7,8-tetrahydrofolate; that stretch reads SPF.

This sequence belongs to the SHMT family. As to quaternary structure, homodimer. Pyridoxal 5'-phosphate is required as a cofactor.

The protein localises to the cytoplasm. The catalysed reaction is (6R)-5,10-methylene-5,6,7,8-tetrahydrofolate + glycine + H2O = (6S)-5,6,7,8-tetrahydrofolate + L-serine. It functions in the pathway one-carbon metabolism; tetrahydrofolate interconversion. Its pathway is amino-acid biosynthesis; glycine biosynthesis; glycine from L-serine: step 1/1. In terms of biological role, catalyzes the reversible interconversion of serine and glycine with tetrahydrofolate (THF) serving as the one-carbon carrier. This reaction serves as the major source of one-carbon groups required for the biosynthesis of purines, thymidylate, methionine, and other important biomolecules. Also exhibits THF-independent aldolase activity toward beta-hydroxyamino acids, producing glycine and aldehydes, via a retro-aldol mechanism. The protein is Serine hydroxymethyltransferase of Halothermothrix orenii (strain H 168 / OCM 544 / DSM 9562).